A 255-amino-acid chain; its full sequence is Type III pantothenate kinase (255 aa).

ATP is bound at residue 6–13 (DVGNTNIV). Substrate is bound by residues tyrosine 100 and 107 to 110 (GADR). Catalysis depends on aspartate 109, which acts as the Proton acceptor. Residue aspartate 129 participates in K(+) binding. Threonine 132 is an ATP binding site. Threonine 184 provides a ligand contact to substrate.

It belongs to the type III pantothenate kinase family. As to quaternary structure, homodimer. It depends on NH4(+) as a cofactor. K(+) is required as a cofactor.

It localises to the cytoplasm. It carries out the reaction (R)-pantothenate + ATP = (R)-4'-phosphopantothenate + ADP + H(+). It functions in the pathway cofactor biosynthesis; coenzyme A biosynthesis; CoA from (R)-pantothenate: step 1/5. In terms of biological role, catalyzes the phosphorylation of pantothenate (Pan), the first step in CoA biosynthesis. The polypeptide is Type III pantothenate kinase (Caldanaerobacter subterraneus subsp. tengcongensis (strain DSM 15242 / JCM 11007 / NBRC 100824 / MB4) (Thermoanaerobacter tengcongensis)).